Reading from the N-terminus, the 33-residue chain is Photosystem II reaction center protein Psb30 (33 aa).

The helical transmembrane segment at 5-25 (LIVQLGSLTLITIAGPLIVAL) threads the bilayer.

Belongs to the Psb30/Ycf12 family. In terms of assembly, PSII is composed of 1 copy each of membrane proteins PsbA, PsbB, PsbC, PsbD, PsbE, PsbF, PsbH, PsbI, PsbJ, PsbK, PsbL, PsbM, PsbT, PsbY, PsbZ, Psb30/Ycf12, peripheral proteins of the oxygen-evolving complex and a large number of cofactors. It forms dimeric complexes.

It is found in the plastid. The protein resides in the chloroplast thylakoid membrane. In terms of biological role, a core subunit of photosystem II (PSII), probably helps stabilize the reaction center. This is Photosystem II reaction center protein Psb30 from Euglena mutabilis.